Here is a 416-residue protein sequence, read N- to C-terminus: Cell division protein FtsZ (416 aa).

GTP contacts are provided by residues 20 to 24 (GGGVN), 107 to 109 (GTG), glutamate 138, arginine 142, and aspartate 186. The segment covering 319–335 (QETNANNSSPAQRQAES) has biased composition (polar residues). Residues 319–416 (QETNANNSSP…DSLDFPDFLK (98 aa)) are disordered. The span at 376 to 392 (QDDDIPDDAGFDVDLPA) shows a compositional bias: acidic residues. Residues 404–416 (ARKDSLDFPDFLK) show a composition bias toward basic and acidic residues.

The protein belongs to the FtsZ family. In terms of assembly, homodimer. Polymerizes to form a dynamic ring structure in a strictly GTP-dependent manner. Interacts directly with several other division proteins.

Its subcellular location is the cytoplasm. Its function is as follows. Essential cell division protein that forms a contractile ring structure (Z ring) at the future cell division site. The regulation of the ring assembly controls the timing and the location of cell division. One of the functions of the FtsZ ring is to recruit other cell division proteins to the septum to produce a new cell wall between the dividing cells. Binds GTP and shows GTPase activity. The polypeptide is Cell division protein FtsZ (Kocuria rhizophila (strain ATCC 9341 / DSM 348 / NBRC 103217 / DC2201)).